Here is a 182-residue protein sequence, read N- to C-terminus: Small ribosomal subunit protein uS5 (182 aa).

An S5 DRBM domain is found at F16–V79.

Belongs to the universal ribosomal protein uS5 family. Part of the 30S ribosomal subunit. Contacts proteins S4 and S8.

Its function is as follows. With S4 and S12 plays an important role in translational accuracy. Functionally, located at the back of the 30S subunit body where it stabilizes the conformation of the head with respect to the body. The sequence is that of Small ribosomal subunit protein uS5 from Bartonella tribocorum (strain CIP 105476 / IBS 506).